An 85-amino-acid polypeptide reads, in one-letter code: Large ribosomal subunit protein bL27 (85 aa).

Residues 1-20 (MATKKAGGSTRNGRDSEAKR) are disordered.

It belongs to the bacterial ribosomal protein bL27 family.

This Glaesserella parasuis serovar 5 (strain SH0165) (Haemophilus parasuis) protein is Large ribosomal subunit protein bL27.